Reading from the N-terminus, the 318-residue chain is Basic leucine zipper (bZIP) transcription factor atfB (318 aa).

The interval 114–157 (FNSSPPEYAPPKHRSSLSEQSQTDGYGVSTRRRKASAIDQCEQQ) is disordered. The tract at residues 160 to 199 (REKREKFLERNRLAASKCRQKKKEHTKLLETRFREVSNKK) is basic motif. Residues 160-223 (REKREKFLER…LNLKNEMLRH (64 aa)) enclose the bZIP domain. Positions 202–216 (LESEIEHLRSEVLNL) are leucine-zipper. The tract at residues 275–301 (DGPMQLPSEMGSPLDQRRDSEQSIMTE) is disordered.

Belongs to the bZIP family. ATF subfamily.

The protein resides in the nucleus. Transcription factor that acts as a key player in the regulatory circuit that integrates secondary metabolism and cellular response to oxidative stress. Regulates the genes involved in development and stress response through direct binding to their promoters. Particularly involved in the resistance to oxidative stress in asexual conidiospores. This chain is Basic leucine zipper (bZIP) transcription factor atfB, found in Aspergillus oryzae (strain ATCC 42149 / RIB 40) (Yellow koji mold).